We begin with the raw amino-acid sequence, 54 residues long: MEFTSALFGASLVQSKHKTTKKHNLVDSCCCSKPTEKPTNSCTCSKCACDSCKC.

It belongs to the metallothionein superfamily. Type 11 family.

The polypeptide is Metallothionein-2 (MTP2) (Yarrowia lipolytica (strain CLIB 122 / E 150) (Yeast)).